The following is a 196-amino-acid chain: ATP synthase subunit b (196 aa).

Residues 24 to 44 (PLSELLIGTLSFALLVAFFFW) form a helical membrane-spanning segment.

Belongs to the ATPase B chain family. In terms of assembly, F-type ATPases have 2 components, F(1) - the catalytic core - and F(0) - the membrane proton channel. F(1) has five subunits: alpha(3), beta(3), gamma(1), delta(1), epsilon(1). F(0) has three main subunits: a(1), b(2) and c(10-14). The alpha and beta chains form an alternating ring which encloses part of the gamma chain. F(1) is attached to F(0) by a central stalk formed by the gamma and epsilon chains, while a peripheral stalk is formed by the delta and b chains.

Its subcellular location is the cell membrane. Its function is as follows. F(1)F(0) ATP synthase produces ATP from ADP in the presence of a proton or sodium gradient. F-type ATPases consist of two structural domains, F(1) containing the extramembraneous catalytic core and F(0) containing the membrane proton channel, linked together by a central stalk and a peripheral stalk. During catalysis, ATP synthesis in the catalytic domain of F(1) is coupled via a rotary mechanism of the central stalk subunits to proton translocation. Component of the F(0) channel, it forms part of the peripheral stalk, linking F(1) to F(0). This Frankia casuarinae (strain DSM 45818 / CECT 9043 / HFP020203 / CcI3) protein is ATP synthase subunit b.